Here is a 297-residue protein sequence, read N- to C-terminus: N-acetylmuramic acid 6-phosphate etherase (297 aa).

One can recognise an SIS domain in the interval 55–218 (AAAALKSGGR…STGAMVKFGK (164 aa)). Catalysis depends on Glu83, which acts as the Proton donor. Glu114 is an active-site residue.

Belongs to the GCKR-like family. MurNAc-6-P etherase subfamily. As to quaternary structure, homodimer.

It carries out the reaction N-acetyl-D-muramate 6-phosphate + H2O = N-acetyl-D-glucosamine 6-phosphate + (R)-lactate. It participates in amino-sugar metabolism; 1,6-anhydro-N-acetylmuramate degradation. Its pathway is amino-sugar metabolism; N-acetylmuramate degradation. The protein operates within cell wall biogenesis; peptidoglycan recycling. In terms of biological role, specifically catalyzes the cleavage of the D-lactyl ether substituent of MurNAc 6-phosphate, producing GlcNAc 6-phosphate and D-lactate. Together with AnmK, is also required for the utilization of anhydro-N-acetylmuramic acid (anhMurNAc) either imported from the medium or derived from its own cell wall murein, and thus plays a role in cell wall recycling. The chain is N-acetylmuramic acid 6-phosphate etherase from Salmonella choleraesuis (strain SC-B67).